Reading from the N-terminus, the 505-residue chain is uncharacterized protein (505 aa).

The first 19 residues, 1–19 (MILFTAIILVASVVHVVVS), serve as a signal peptide directing secretion. The Extracellular segment spans residues 20-483 (SPQQCYYCVE…EQPNSAPRGE (464 aa)). Residues 484-504 (IHQLFRCTFVAVFIVFACFIV) traverse the membrane as a helical segment. Position 505 (cysteine 505) is a topological domain, cytoplasmic.

Component of the acid-insoluble and acid-soluble organic matrix of the aragonitic skeleton (at protein level).

It localises to the membrane. This is an uncharacterized protein from Acropora millepora (Staghorn coral).